A 663-amino-acid polypeptide reads, in one-letter code: A-type ATP synthase subunit I (663 aa).

A run of 7 helical transmembrane segments spans residues 376–396 (FFFG…IVAA), 412–432 (FAYI…LFGS), 468–488 (LAAL…GFVI), 497–517 (GAVF…LLAS), 534–554 (IALF…LMII), 568–588 (ARLM…NVLV), and 589–609 (GMVW…IIFF).

It belongs to the V-ATPase 116 kDa subunit family. As to quaternary structure, has multiple subunits with at least A(3), B(3), C, D, E, F, H, I and proteolipid K(x).

The protein resides in the cell membrane. Component of the A-type ATP synthase that produces ATP from ADP in the presence of a proton gradient across the membrane. The sequence is that of A-type ATP synthase subunit I from Thermococcus kodakarensis (strain ATCC BAA-918 / JCM 12380 / KOD1) (Pyrococcus kodakaraensis (strain KOD1)).